The primary structure comprises 224 residues: MAMQRRRLGRVDYATTFDAMRAFTETRTPGTPDELWLCEHPPVFTQGLAGKAEHVLDAGDIPVVASNRGGQVTYHGPGQVVAYPLIDLQALGIFVKEYVFRLEQAVIKTLEGYGVTGHRVTGAPGIYVNLCDPFGHGALPGPPDPRDPWRGIGKIAALGIKVSRHCSYHGLALNVAMDLSPYERINPCGYAGLRTVDLSTIGVPVDPERAAADLGDRLESYLSP.

The BPL/LPL catalytic domain maps to 29 to 224; it reads PGTPDELWLC…GDRLESYLSP (196 aa). Substrate-binding positions include 68 to 75, 157 to 159, and 170 to 172; these read RGGQVTYH, ALG, and GLA. The Acyl-thioester intermediate role is filled by cysteine 188.

The protein belongs to the LipB family.

It is found in the cytoplasm. It catalyses the reaction octanoyl-[ACP] + L-lysyl-[protein] = N(6)-octanoyl-L-lysyl-[protein] + holo-[ACP] + H(+). Its pathway is protein modification; protein lipoylation via endogenous pathway; protein N(6)-(lipoyl)lysine from octanoyl-[acyl-carrier-protein]: step 1/2. In terms of biological role, catalyzes the transfer of endogenously produced octanoic acid from octanoyl-acyl-carrier-protein onto the lipoyl domains of lipoate-dependent enzymes. Lipoyl-ACP can also act as a substrate although octanoyl-ACP is likely to be the physiological substrate. In Methylibium petroleiphilum (strain ATCC BAA-1232 / LMG 22953 / PM1), this protein is Octanoyltransferase.